We begin with the raw amino-acid sequence, 120 residues long: Small ribosomal subunit protein eS24 (120 aa).

The tract at residues 101–120 (RDAGTKQKKGGSKGGQGAKG) is disordered.

It belongs to the eukaryotic ribosomal protein eS24 family.

This Saccharolobus islandicus (strain M.16.4 / Kamchatka #3) (Sulfolobus islandicus) protein is Small ribosomal subunit protein eS24.